Here is a 126-residue protein sequence, read N- to C-terminus: Small ribosomal subunit protein eS6 (126 aa).

The protein belongs to the eukaryotic ribosomal protein eS6 family.

In Thermococcus sibiricus (strain DSM 12597 / MM 739), this protein is Small ribosomal subunit protein eS6.